The sequence spans 1812 residues: Protein virilizer homolog (1812 aa).

At Ala2 the chain carries N-acetylalanine. Disordered regions lie at residues 132 to 302 (ISHD…EQIS) and 576 to 596 (KTSS…GLER). 2 positions are modified to phosphoserine: Ser133 and Ser138. The segment covering 139 to 152 (PPPPPPPPPPPQPQ) has biased composition (pro residues). A compositionally biased stretch (basic and acidic residues) spans 160–169 (KHADGEKEDQ). The residue at position 173 (Ser173) is a Phosphoserine. Residues 174-190 (PPRPQPRGPRTPPGPPP) are compositionally biased toward pro residues. A Phosphothreonine modification is found at Thr184. The residue at position 222 (Ser222) is a Phosphoserine. Positions 224-233 (DRNSVPQEGQ) are enriched in polar residues. Acidic residues-rich tracts occupy residues 234–266 (YSDE…EDED) and 274–302 (IPEE…EQIS). Over residues 584–596 (SEPDHDTDAGLER) the composition is skewed to basic and acidic residues. Tyr914 is subject to Phosphotyrosine. The residue at position 1579 (Ser1579) is a Phosphoserine. Disordered stretches follow at residues 1616-1635 (HVVP…GIRP) and 1663-1812 (KEVV…SFTR). Gly residues predominate over residues 1689–1698 (GFSGNRGGRG). Thr1708 is modified (phosphothreonine). Arg1723 carries the omega-N-methylarginine modification. Over residues 1723-1748 (RGSSWSAQNTPRGNYNESRGGQSNFN) the composition is skewed to polar residues. Arg1741 bears the Asymmetric dimethylarginine; alternate mark. Position 1741 is an omega-N-methylarginine; alternate (Arg1741). Arg1773, Arg1775, and Arg1793 each carry asymmetric dimethylarginine. Residues 1788 to 1802 (GSGGSRGKFVSGGSG) show a composition bias toward gly residues. Basic residues predominate over residues 1803-1812 (RGRHVRSFTR).

It belongs to the vir family. In terms of assembly, component of the WMM complex, a N6-methyltransferase complex composed of a catalytic subcomplex, named MAC, and of an associated subcomplex, named MACOM. The MAC subcomplex is composed of METTL3 and METTL14. The MACOM subcomplex is composed of WTAP, ZC3H13, CBLL1/HAKAI, VIRMA, and, in some cases of RBM15 (RBM15 or RBM15B). Interacts with WTAP. Also a component of a MACOM-like complex, named WTAP complex, composed of WTAP, ZC3H13, CBLL1, VIRMA, RBM15, BCLAF1 and THRAP3. Interacts with NUDT21 and CPSF6.

The protein localises to the nucleus speckle. It localises to the nucleus. It is found in the nucleoplasm. Its subcellular location is the cytoplasm. In terms of biological role, associated component of the WMM complex, a complex that mediates N6-methyladenosine (m6A) methylation of RNAs, a modification that plays a role in the efficiency of mRNA splicing and RNA processing. Acts as a key regulator of m6A methylation by promoting m6A methylation of mRNAs in the 3'-UTR near the stop codon: recruits the catalytic core components METTL3 and METTL14, thereby guiding m6A methylation at specific sites. Required for mRNA polyadenylation via its role in selective m6A methylation: m6A methylation of mRNAs in the 3'-UTR near the stop codon correlating with alternative polyadenylation (APA). The protein is Protein virilizer homolog of Homo sapiens (Human).